A 232-amino-acid polypeptide reads, in one-letter code: Large ribosomal subunit protein uL1 (232 aa).

It belongs to the universal ribosomal protein uL1 family. In terms of assembly, part of the 50S ribosomal subunit.

In terms of biological role, binds directly to 23S rRNA. The L1 stalk is quite mobile in the ribosome, and is involved in E site tRNA release. Functionally, protein L1 is also a translational repressor protein, it controls the translation of the L11 operon by binding to its mRNA. The chain is Large ribosomal subunit protein uL1 from Ruegeria sp. (strain TM1040) (Silicibacter sp.).